The following is a 406-amino-acid chain: Probable endo-xylogalacturonan hydrolase A (406 aa).

Residues methionine 1–alanine 18 form the signal peptide. 4 PbH1 repeats span residues threonine 183–alanine 213, serine 214–proline 235, serine 237–serine 257, and valine 299–serine 320. Aspartate 228 functions as the Proton donor in the catalytic mechanism. Residue histidine 251 is part of the active site. Asparagine 301 carries an N-linked (GlcNAc...) asparagine glycan.

Belongs to the glycosyl hydrolase 28 family.

Its subcellular location is the secreted. Pectinolytic enzyme involved in the degradation of xylogalacturonan (xga), a galacturonan backbone heavily substituted with xylose, and which is one important component of the hairy regions of pectin. Activity requires a galacturonic acid backbone substituted with xylose. The sequence is that of Probable endo-xylogalacturonan hydrolase A (xghA) from Aspergillus fumigatus (strain ATCC MYA-4609 / CBS 101355 / FGSC A1100 / Af293) (Neosartorya fumigata).